The sequence spans 692 residues: Glycine--tRNA ligase beta subunit (692 aa).

It belongs to the class-II aminoacyl-tRNA synthetase family. Tetramer of two alpha and two beta subunits.

The protein resides in the cytoplasm. The enzyme catalyses tRNA(Gly) + glycine + ATP = glycyl-tRNA(Gly) + AMP + diphosphate. The polypeptide is Glycine--tRNA ligase beta subunit (Oceanobacillus iheyensis (strain DSM 14371 / CIP 107618 / JCM 11309 / KCTC 3954 / HTE831)).